The chain runs to 2194 residues: Genome polyprotein (2194 aa).

Gly-2 carries the N-myristoyl glycine; by host lipid modification. The Cytoplasmic portion of the chain corresponds to 2–1504 (GAQVSTQKTG…HVSRAFICLQ (1503 aa)). An amphipathic alpha-helix region spans residues 566-582 (LYQNDPEGALNKAVGRV). Residues His-881 and Asp-899 each act as for protease 2A activity in the active site. Positions 916 and 918 each coordinate Zn(2+). The active-site For protease 2A activity is the Cys-970. Positions 976 and 978 each coordinate Zn(2+). Residues 1110 to 1182 (NNNWLKKFTE…EQSAPSQSDQ (73 aa)) are membrane-binding. Residues 1110–1248 (NNNWLKKFTE…SPGAGKSVAT (139 aa)) form an oligomerization region. The RNA-binding stretch occupies residues 1131–1135 (AIKIQ). Residues 1214-1370 (EKKMSNYIQF…SMYSQNGKIN (157 aa)) form the SF3 helicase domain. The Zn(2+) site is built by Cys-1378, Cys-1390, and Cys-1395. A C4-type; degenerate zinc finger spans residues 1378-1395 (CDEECCPVNFKRCCPLVC). The segment at 1422–1429 (EYNHRHSV) is RNA-binding. Residues 1433–1438 (LEALFQ) are oligomerization. Residues 1505-1520 (ALTTFVSVAGIIYIIY) lie within the membrane without spanning it. Residues 1521–2194 (KLFAGFQGAY…TLRRKWLDSF (674 aa)) lie on the Cytoplasmic side of the membrane. Residue Tyr-1530 is modified to O-(5'-phospho-RNA)-tyrosine. The 179-residue stretch at 1550–1728 (GPAFEFAVAM…FSAALLRHYF (179 aa)) folds into the Peptidase C3 domain. Catalysis depends on for protease 3C activity residues His-1589, Glu-1620, and Cys-1696. Positions 1959–2075 (GHLIAFDYSG…SYPHPIDASL (117 aa)) constitute a RdRp catalytic domain. Positions 1965 and 2061 each coordinate Mg(2+).

This sequence belongs to the picornaviruses polyprotein family. As to quaternary structure, interacts with capsid protein VP1 and capsid protein VP3 to form heterotrimeric protomers. In terms of assembly, interacts with capsid protein VP0, and capsid protein VP3 to form heterotrimeric protomers. Five protomers subsequently associate to form pentamers which serve as building blocks for the capsid. Interacts with capsid protein VP2, capsid protein VP3 and capsid protein VP4 following cleavage of capsid protein VP0. Interacts with capsid protein VP1 and capsid protein VP3 in the mature capsid. As to quaternary structure, interacts with capsid protein VP0 and capsid protein VP1 to form heterotrimeric protomers. Five protomers subsequently associate to form pentamers which serve as building blocks for the capsid. Interacts with capsid protein VP4 in the mature capsid. Interacts with protein 2C; this interaction may be important for virion morphogenesis. In terms of assembly, interacts with capsid protein VP1 and capsid protein VP3. Homodimer. As to quaternary structure, homohexamer; forms a hexameric ring structure with 6-fold symmetry characteristic of AAA+ ATPases. Interacts (via N-terminus) with host RTN3 (via reticulon domain); this interaction is important for viral replication. Interacts with capsid protein VP3; this interaction may be important for virion morphogenesis. In terms of assembly, interacts with protein 3CD. Homodimer. Interacts with host GBF1. Interacts (via GOLD domain) with host ACBD3 (via GOLD domain); this interaction allows the formation of a viral protein 3A/ACBD3 heterotetramer with a 2:2 stoichiometry, which will stimulate the recruitment of host PI4KB in order to synthesize PI4P at the viral RNA replication sites. As to quaternary structure, interacts with RNA-directed RNA polymerase. In terms of assembly, interacts with protein 3AB and with RNA-directed RNA polymerase. Interacts with Viral protein genome-linked and with protein 3CD. The cofactor is Mg(2+). Specific enzymatic cleavages in vivo by the viral proteases yield processing intermediates and the mature proteins. In terms of processing, myristoylation is required for the formation of pentamers during virus assembly. Further assembly of 12 pentamers and a molecule of genomic RNA generates the provirion. Post-translationally, during virion maturation, immature virions are rendered infectious following cleavage of VP0 into VP4 and VP2. This maturation seems to be an autocatalytic event triggered by the presence of RNA in the capsid and it is followed by a conformational change infectious virion. Myristoylation is required during RNA encapsidation and formation of the mature virus particle. In terms of processing, VPg is uridylylated by the polymerase into VPg-pUpU. This acts as a nucleotide-peptide primer for the genomic RNA replication.

Its subcellular location is the virion. It is found in the host cytoplasm. It localises to the host cytoplasmic vesicle membrane. The protein localises to the host nucleus. It catalyses the reaction a ribonucleoside 5'-triphosphate + H2O = a ribonucleoside 5'-diphosphate + phosphate + H(+). It carries out the reaction Selective cleavage of Tyr-|-Gly bond in the picornavirus polyprotein.. The enzyme catalyses RNA(n) + a ribonucleoside 5'-triphosphate = RNA(n+1) + diphosphate. The catalysed reaction is Selective cleavage of Gln-|-Gly bond in the poliovirus polyprotein. In other picornavirus reactions Glu may be substituted for Gln, and Ser or Thr for Gly.. With respect to regulation, replication or transcription is subject to high level of random mutations by the nucleotide analog ribavirin. Its function is as follows. Forms an icosahedral capsid of pseudo T=3 symmetry with capsid proteins VP2 and VP3. The capsid is 300 Angstroms in diameter, composed of 60 copies of each capsid protein and enclosing the viral positive strand RNA genome. Capsid protein VP1 mainly forms the vertices of the capsid. Capsid protein VP1 interacts with host cell receptor to provide virion attachment to target host cells. This attachment induces virion internalization. Tyrosine kinases are probably involved in the entry process. After binding to its receptor, the capsid undergoes conformational changes. Capsid protein VP1 N-terminus (that contains an amphipathic alpha-helix) and capsid protein VP4 are externalized. Together, they shape a pore in the host membrane through which viral genome is translocated to host cell cytoplasm. Forms an icosahedral capsid of pseudo T=3 symmetry with capsid proteins VP2 and VP3. The capsid is 300 Angstroms in diameter, composed of 60 copies of each capsid protein and enclosing the viral positive strand RNA genome. Functionally, lies on the inner surface of the capsid shell. After binding to the host receptor, the capsid undergoes conformational changes. Capsid protein VP4 is released, Capsid protein VP1 N-terminus is externalized, and together, they shape a pore in the host membrane through which the viral genome is translocated into the host cell cytoplasm. In terms of biological role, component of immature procapsids, which is cleaved into capsid proteins VP4 and VP2 after maturation. Allows the capsid to remain inactive before the maturation step. Its function is as follows. Cysteine protease that cleaves viral polyprotein and specific host proteins. It is responsible for the autocatalytic cleavage between the P1 and P2 regions, which is the first cleavage occurring in the polyprotein. Also cleaves the host translation initiation factor EIF4G1, in order to shut down the capped cellular mRNA translation. Inhibits the host nucleus-cytoplasm protein and RNA trafficking by cleaving host members of the nuclear pores. Counteracts stress granule formation probably by antagonizing its assembly or promoting its dissassembly. Plays an essential role in the virus replication cycle by acting as a viroporin. Creates a pore in the host endoplasmic reticulum and as a consequence releases Ca2+ in the cytoplasm of infected cell. In turn, high levels of cytoplasmic calcium may trigger membrane trafficking and transport of viral ER-associated proteins to viroplasms, sites of viral genome replication. Functionally, induces and associates with structural rearrangements of intracellular membranes. Displays RNA-binding, nucleotide binding and NTPase activities. May play a role in virion morphogenesis and viral RNA encapsidation by interacting with the capsid protein VP3. In terms of biological role, localizes the viral replication complex to the surface of membranous vesicles. Together with protein 3CD binds the Cis-Active RNA Element (CRE) which is involved in RNA synthesis initiation. Acts as a cofactor to stimulate the activity of 3D polymerase, maybe through a nucleid acid chaperone activity. Its function is as follows. Localizes the viral replication complex to the surface of membranous vesicles. It inhibits host cell endoplasmic reticulum-to-Golgi apparatus transport and causes the disassembly of the Golgi complex, possibly through GBF1 interaction. This would result in depletion of MHC, trail receptors and IFN receptors at the host cell surface. Plays an essential role in viral RNA replication by recruiting ACBD3 and PI4KB at the viral replication sites, thereby allowing the formation of the rearranged membranous structures where viral replication takes place. Acts as a primer for viral RNA replication and remains covalently bound to viral genomic RNA. VPg is uridylylated prior to priming replication into VPg-pUpU. The oriI viral genomic sequence may act as a template for this. The VPg-pUpU is then used as primer on the genomic RNA poly(A) by the RNA-dependent RNA polymerase to replicate the viral genome. During genome replication, the VPg-RNA linkage is removed by the host TDP2, thereby accelerating replication. During the late stage of the replication cycle, host TDP2 is excluded from sites of viral RNA synthesis and encapsidation, allowing for the generation of progeny virions. Functionally, involved in the viral replication complex and viral polypeptide maturation. It exhibits protease activity with a specificity and catalytic efficiency that is different from protease 3C. Protein 3CD lacks polymerase activity. Protein 3CD binds to the 5'UTR of the viral genome. In terms of biological role, replicates the viral genomic RNA on the surface of intracellular membranes. May form linear arrays of subunits that propagate along a strong head-to-tail interaction called interface-I. Covalently attaches UMP to a tyrosine of VPg, which is used to prime RNA synthesis. The positive stranded RNA genome is first replicated at virus induced membranous vesicles, creating a dsRNA genomic replication form. This dsRNA is then used as template to synthesize positive stranded RNA genomes. ss(+)RNA genomes are either translated, replicated or encapsidated. Its function is as follows. Major viral protease that mediates proteolytic processing of the polyprotein. Cleaves host EIF5B, contributing to host translation shutoff. Also cleaves host PABPC1, contributing to host translation shutoff. Cleaves host NLRP1, triggers host N-glycine-mediated degradation of the autoinhibitory NLRP1 N-terminal fragment. The sequence is that of Genome polyprotein from Homo sapiens (Human).